The sequence spans 390 residues: GTPase Obg (390 aa).

One can recognise an Obg domain in the interval 1–159 (MKFVDEATIK…RELRLELLLL (159 aa)). The OBG-type G domain occupies 160–333 (ADVGMLGLPN…LCDELADFMD (174 aa)). Residues 166-173 (GLPNAGKS), 191-195 (FTTLI), 213-216 (DIPG), 283-286 (NKTD), and 314-316 (AAV) contribute to the GTP site. Residues Ser-173 and Thr-193 each contribute to the Mg(2+) site.

The protein belongs to the TRAFAC class OBG-HflX-like GTPase superfamily. OBG GTPase family. As to quaternary structure, monomer. The cofactor is Mg(2+).

The protein resides in the cytoplasm. Functionally, an essential GTPase which binds GTP, GDP and possibly (p)ppGpp with moderate affinity, with high nucleotide exchange rates and a fairly low GTP hydrolysis rate. Plays a role in control of the cell cycle, stress response, ribosome biogenesis and in those bacteria that undergo differentiation, in morphogenesis control. The sequence is that of GTPase Obg from Aliivibrio fischeri (strain MJ11) (Vibrio fischeri).